The chain runs to 618 residues: Delta-like protein 3 (618 aa).

An N-terminal signal peptide occupies residues 1-26; sequence MVSPRMSGLLSQTVILALIFLPQTRP. Topologically, residues 27–492 are extracellular; it reads AGVFELQIHS…LRPGDPQRYL (466 aa). A DSL domain is found at 176 to 215; sequence ARCEPPAVGTACTRLCRPRSAPSRCGPGLRPCAPLEDECE. 6 consecutive EGF-like domains span residues 216–249, 274–310, 312–351, 353–389, 391–427, and 429–465; these read APLV…PLCT, GPGP…LRCE, SGVT…SNCE, RVDR…PRCE, DLDD…RDCR, and RADP…ARCE. 18 disulfide bridges follow: Cys-220-Cys-231, Cys-224-Cys-237, Cys-239-Cys-248, Cys-278-Cys-289, Cys-283-Cys-298, Cys-300-Cys-309, Cys-316-Cys-327, Cys-321-Cys-339, Cys-341-Cys-350, Cys-357-Cys-368, Cys-362-Cys-377, Cys-379-Cys-388, Cys-395-Cys-406, Cys-400-Cys-415, Cys-417-Cys-426, Cys-433-Cys-444, Cys-438-Cys-453, and Cys-455-Cys-464. A helical membrane pass occupies residues 493–513; the sequence is LPPALGLLVAAGVAGAALLLV. The Cytoplasmic segment spans residues 514–618; the sequence is HVRRRGHSQD…PYPSSILSVK (105 aa). The span at 546–562 shows a compositional bias: polar residues; the sequence is NLRTQEGSGDGPSSSVD. A disordered region spans residues 546–566; it reads NLRTQEGSGDGPSSSVDWNRP.

In terms of assembly, can bind and activate Notch-1 or another Notch receptor. Ubiquitinated by MIB (MIB1 or MIB2), leading to its endocytosis and subsequent degradation.

It is found in the membrane. Functionally, inhibits primary neurogenesis. May be required to divert neurons along a specific differentiation pathway. Plays a role in the formation of somite boundaries during segmentation of the paraxial mesoderm. This is Delta-like protein 3 (DLL3) from Homo sapiens (Human).